The sequence spans 129 residues: S-adenosylmethionine decarboxylase proenzyme (129 aa).

The active-site Schiff-base intermediate with substrate; via pyruvic acid is the Ser-63. Residue Ser-63 is modified to Pyruvic acid (Ser); by autocatalysis. His-68 serves as the catalytic Proton acceptor; for processing activity. Cys-83 (proton donor; for catalytic activity) is an active-site residue.

The protein belongs to the prokaryotic AdoMetDC family. Type 1 subfamily. Heterotetramer of two alpha and two beta chains arranged as a dimer of alpha/beta heterodimers. It depends on pyruvate as a cofactor. Is synthesized initially as an inactive proenzyme. Formation of the active enzyme involves a self-maturation process in which the active site pyruvoyl group is generated from an internal serine residue via an autocatalytic post-translational modification. Two non-identical subunits are generated from the proenzyme in this reaction, and the pyruvate is formed at the N-terminus of the alpha chain, which is derived from the carboxyl end of the proenzyme. The post-translation cleavage follows an unusual pathway, termed non-hydrolytic serinolysis, in which the side chain hydroxyl group of the serine supplies its oxygen atom to form the C-terminus of the beta chain, while the remainder of the serine residue undergoes an oxidative deamination to produce ammonia and the pyruvoyl group blocking the N-terminus of the alpha chain.

It catalyses the reaction S-adenosyl-L-methionine + H(+) = S-adenosyl 3-(methylsulfanyl)propylamine + CO2. It participates in amine and polyamine biosynthesis; S-adenosylmethioninamine biosynthesis; S-adenosylmethioninamine from S-adenosyl-L-methionine: step 1/1. Its function is as follows. Catalyzes the decarboxylation of S-adenosylmethionine to S-adenosylmethioninamine (dcAdoMet), the propylamine donor required for the synthesis of the polyamines spermine and spermidine from the diamine putrescine. The protein is S-adenosylmethionine decarboxylase proenzyme of Shouchella clausii (strain KSM-K16) (Alkalihalobacillus clausii).